We begin with the raw amino-acid sequence, 130 residues long: Small ribosomal subunit protein uS8 (130 aa).

Belongs to the universal ribosomal protein uS8 family. As to quaternary structure, part of the 30S ribosomal subunit.

One of the primary rRNA binding proteins, it binds directly to 16S rRNA central domain where it helps coordinate assembly of the platform of the 30S subunit. The protein is Small ribosomal subunit protein uS8 of Methanobrevibacter smithii (strain ATCC 35061 / DSM 861 / OCM 144 / PS).